We begin with the raw amino-acid sequence, 405 residues long: Deoxyguanosinetriphosphate triphosphohydrolase-like protein (405 aa).

The region spanning 75 to 219 (RLTHTIEVAQ…AAVADDIAYN (145 aa)) is the HD domain.

The protein belongs to the dGTPase family. Type 2 subfamily.

This chain is Deoxyguanosinetriphosphate triphosphohydrolase-like protein, found in Allorhizobium ampelinum (strain ATCC BAA-846 / DSM 112012 / S4) (Agrobacterium vitis (strain S4)).